Here is a 201-residue protein sequence, read N- to C-terminus: dTTP/UTP pyrophosphatase (201 aa).

The Proton acceptor role is filled by Asp75.

Belongs to the Maf family. YhdE subfamily. It depends on a divalent metal cation as a cofactor.

It localises to the cytoplasm. It catalyses the reaction dTTP + H2O = dTMP + diphosphate + H(+). The catalysed reaction is UTP + H2O = UMP + diphosphate + H(+). Functionally, nucleoside triphosphate pyrophosphatase that hydrolyzes dTTP and UTP. May have a dual role in cell division arrest and in preventing the incorporation of modified nucleotides into cellular nucleic acids. The polypeptide is dTTP/UTP pyrophosphatase (Pseudomonas fluorescens (strain ATCC BAA-477 / NRRL B-23932 / Pf-5)).